The sequence spans 739 residues: Phosphoribosylformylglycinamidine synthase subunit PurL (739 aa).

His-53 is an active-site residue. Residues Tyr-56 and Lys-95 each contribute to the ATP site. Glu-97 lines the Mg(2+) pocket. Substrate is bound by residues 98–101 and Arg-120; that span reads SHNH. Residue His-99 is the Proton acceptor of the active site. Asp-121 serves as a coordination point for Mg(2+). Gln-244 is a substrate binding site. Residue Asp-274 coordinates Mg(2+). 318–320 contributes to the substrate binding site; it reads ESQ. The ATP site is built by Asp-501 and Gly-538. Asn-539 is a binding site for Mg(2+). Ser-541 contributes to the substrate binding site.

The protein belongs to the FGAMS family. As to quaternary structure, monomer. Part of the FGAM synthase complex composed of 1 PurL, 1 PurQ and 2 PurS subunits.

It localises to the cytoplasm. It catalyses the reaction N(2)-formyl-N(1)-(5-phospho-beta-D-ribosyl)glycinamide + L-glutamine + ATP + H2O = 2-formamido-N(1)-(5-O-phospho-beta-D-ribosyl)acetamidine + L-glutamate + ADP + phosphate + H(+). It participates in purine metabolism; IMP biosynthesis via de novo pathway; 5-amino-1-(5-phospho-D-ribosyl)imidazole from N(2)-formyl-N(1)-(5-phospho-D-ribosyl)glycinamide: step 1/2. Functionally, part of the phosphoribosylformylglycinamidine synthase complex involved in the purines biosynthetic pathway. Catalyzes the ATP-dependent conversion of formylglycinamide ribonucleotide (FGAR) and glutamine to yield formylglycinamidine ribonucleotide (FGAM) and glutamate. The FGAM synthase complex is composed of three subunits. PurQ produces an ammonia molecule by converting glutamine to glutamate. PurL transfers the ammonia molecule to FGAR to form FGAM in an ATP-dependent manner. PurS interacts with PurQ and PurL and is thought to assist in the transfer of the ammonia molecule from PurQ to PurL. The polypeptide is Phosphoribosylformylglycinamidine synthase subunit PurL (Listeria monocytogenes serovar 1/2a (strain ATCC BAA-679 / EGD-e)).